The following is a 72-amino-acid chain: Gas vesicle protein A (72 aa).

Belongs to the gas vesicle GvpA family. As to quaternary structure, the gas vesicle shell is 2 nm thick and consists of a single layer of this protein. It forms helical ribs nearly perpendicular to the long axis of the vesicle.

The protein localises to the gas vesicle shell. In terms of biological role, gas vesicles are hollow, gas filled proteinaceous nanostructures found in some microorganisms. During planktonic growth they allow positioning of the organism at a favorable depth for light or nutrient acquisition. GvpA forms the protein shell. The protein is Gas vesicle protein A of Planktothrix agardhii (Oscillatoria agardhii).